The primary structure comprises 512 residues: 2-isopropylmalate synthase (512 aa).

Positions 4 to 266 constitute a Pyruvate carboxyltransferase domain; it reads IQFFDTTLRD…ETNIVLNQFK (263 aa). Mn(2+) contacts are provided by Asp13, His201, His203, and Asn237. The segment at 390 to 512 is regulatory domain; it reads ELKHLQVQYV…SKQADFEEVK (123 aa).

Belongs to the alpha-IPM synthase/homocitrate synthase family. LeuA type 1 subfamily. Homodimer. Mn(2+) is required as a cofactor.

The protein localises to the cytoplasm. It catalyses the reaction 3-methyl-2-oxobutanoate + acetyl-CoA + H2O = (2S)-2-isopropylmalate + CoA + H(+). It functions in the pathway amino-acid biosynthesis; L-leucine biosynthesis; L-leucine from 3-methyl-2-oxobutanoate: step 1/4. Its function is as follows. Catalyzes the condensation of the acetyl group of acetyl-CoA with 3-methyl-2-oxobutanoate (2-ketoisovalerate) to form 3-carboxy-3-hydroxy-4-methylpentanoate (2-isopropylmalate). In Listeria monocytogenes serotype 4a (strain HCC23), this protein is 2-isopropylmalate synthase.